The chain runs to 129 residues: Small ribosomal subunit protein uS9 (129 aa).

The protein belongs to the universal ribosomal protein uS9 family.

In Helicobacter pylori (strain P12), this protein is Small ribosomal subunit protein uS9.